Reading from the N-terminus, the 423-residue chain is Histidine--tRNA ligase 2 (423 aa).

It belongs to the class-II aminoacyl-tRNA synthetase family. As to quaternary structure, homodimer.

The protein resides in the cytoplasm. It carries out the reaction tRNA(His) + L-histidine + ATP = L-histidyl-tRNA(His) + AMP + diphosphate + H(+). This chain is Histidine--tRNA ligase 2, found in Bacillus cereus (strain ATCC 14579 / DSM 31 / CCUG 7414 / JCM 2152 / NBRC 15305 / NCIMB 9373 / NCTC 2599 / NRRL B-3711).